Reading from the N-terminus, the 308-residue chain is Serine/threonine-protein phosphatase 4 catalytic subunit (308 aa).

Mn(2+) is bound by residues D51, H53, D79, and N111. Catalysis depends on H112, which acts as the Proton donor. 2 residues coordinate Mn(2+): H161 and H235. A Leucine methyl ester modification is found at L308.

It belongs to the PPP phosphatase family. PP-4 (PP-X) subfamily. Catalytic subunit of the histone H2A phosphatase complex (HTP-C) containing PPH3, PSY2 and PSY4. The cofactor is Mn(2+).

Its subcellular location is the cytoplasm. It is found in the nucleus. It carries out the reaction O-phospho-L-seryl-[protein] + H2O = L-seryl-[protein] + phosphate. It catalyses the reaction O-phospho-L-threonyl-[protein] + H2O = L-threonyl-[protein] + phosphate. Functionally, forms the histone H2A phosphatase complex in association with the regulatory subunits PSY2 and PSY4, which dephosphorylates H2AS128ph (gamma-H2A) that has been displaced from sites of DNA lesions in the double-stranded DNA break repair process. Dephosphorylation is necessary for efficient recovery from the DNA damage checkpoint. The protein is Serine/threonine-protein phosphatase 4 catalytic subunit (PPH3) of Kluyveromyces lactis (strain ATCC 8585 / CBS 2359 / DSM 70799 / NBRC 1267 / NRRL Y-1140 / WM37) (Yeast).